Reading from the N-terminus, the 95-residue chain is Cell division topological specificity factor (95 aa).

This sequence belongs to the MinE family.

Functionally, prevents the cell division inhibition by proteins MinC and MinD at internal division sites while permitting inhibition at polar sites. This ensures cell division at the proper site by restricting the formation of a division septum at the midpoint of the long axis of the cell. This is Cell division topological specificity factor from Synechococcus sp. (strain CC9902).